We begin with the raw amino-acid sequence, 582 residues long: ATP-dependent lipid A-core flippase (582 aa).

5 helical membrane-spanning segments follow: residues 25-45 (AGLI…TFML), 69-89 (LAVI…SYCI), 137-159 (ASSS…LFIM), 253-273 (PIIQ…ASFP), and 275-295 (VMET…IALM). Positions 28–310 (IVAAIALILN…LTNVNTQFQR (283 aa)) constitute an ABC transmembrane type-1 domain. Residues 342–578 (IEFRHVTFYY…QGVYAQLNRM (237 aa)) form the ABC transporter domain. 376-383 (GRSGSGKS) is an ATP binding site.

The protein belongs to the ABC transporter superfamily. Lipid exporter (TC 3.A.1.106) family. Homodimer.

It is found in the cell inner membrane. The catalysed reaction is ATP + H2O + lipid A-core oligosaccharideSide 1 = ADP + phosphate + lipid A-core oligosaccharideSide 2.. Functionally, involved in lipopolysaccharide (LPS) biosynthesis. Translocates lipid A-core from the inner to the outer leaflet of the inner membrane. Transmembrane domains (TMD) form a pore in the inner membrane and the ATP-binding domain (NBD) is responsible for energy generation. This chain is ATP-dependent lipid A-core flippase, found in Yersinia pestis bv. Antiqua (strain Antiqua).